The following is an 874-amino-acid chain: Alanine--tRNA ligase (874 aa).

Zn(2+)-binding residues include histidine 563, histidine 567, cysteine 665, and histidine 669.

Belongs to the class-II aminoacyl-tRNA synthetase family. The cofactor is Zn(2+).

Its subcellular location is the cytoplasm. The catalysed reaction is tRNA(Ala) + L-alanine + ATP = L-alanyl-tRNA(Ala) + AMP + diphosphate. Its function is as follows. Catalyzes the attachment of alanine to tRNA(Ala) in a two-step reaction: alanine is first activated by ATP to form Ala-AMP and then transferred to the acceptor end of tRNA(Ala). Also edits incorrectly charged Ser-tRNA(Ala) and Gly-tRNA(Ala) via its editing domain. This is Alanine--tRNA ligase from Histophilus somni (strain 129Pt) (Haemophilus somnus).